Reading from the N-terminus, the 289-residue chain is G1/S-specific cyclin-D2 (289 aa).

In terms of domain architecture, Cyclin N-terminal spans 26 to 151 (VLQNLLTIEE…VVLGKLKWNL (126 aa)). Residues 264 to 289 (DQRDGSKSEDELDQASTPTDVRDIDL) are disordered. Phosphoserine is present on S271. The residue at position 280 (T280) is a Phosphothreonine.

It belongs to the cyclin family. Cyclin D subfamily. Interacts with either CDK4 or CDK6 protein kinase to form a serine/threonine kinase holoenzyme complex. The cyclin subunit imparts substrate specificity to the complex. Post-translationally, phosphorylation at Thr-280 by MAP kinases is required for ubiquitination and degradation by the DCX(AMBRA1) complex. In terms of processing, ubiquitinated by the DCX(AMBRA1) complex during the transition from G1 to S cell phase, leading to its degradation: ubiquitination is dependent on Thr-280 phosphorylation. The DCX(AMBRA1) complex represents the major regulator of CCND2 stability during the G1/S transition. Polyubiquitinated by the SCF(FBXL2) complex, leading to proteasomal degradation.

It is found in the nucleus. Its subcellular location is the cytoplasm. It localises to the nucleus membrane. In terms of biological role, regulatory component of the cyclin D2-CDK4 (DC) complex that phosphorylates and inhibits members of the retinoblastoma (RB) protein family including RB1 and regulates the cell-cycle during G(1)/S transition. Phosphorylation of RB1 allows dissociation of the transcription factor E2F from the RB/E2F complex and the subsequent transcription of E2F target genes which are responsible for the progression through the G(1) phase. Hypophosphorylates RB1 in early G(1) phase. Cyclin D-CDK4 complexes are major integrators of various mitogenenic and antimitogenic signals. The polypeptide is G1/S-specific cyclin-D2 (Homo sapiens (Human)).